Reading from the N-terminus, the 129-residue chain is uncharacterized protein (129 aa).

The chain crosses the membrane as a helical span at residues 33-50 (MGGNVMWFIALLFALLIA).

It localises to the membrane. This is an uncharacterized protein from Saccharomyces cerevisiae (strain ATCC 204508 / S288c) (Baker's yeast).